Here is a 334-residue protein sequence, read N- to C-terminus: MQSNTFLTPRIIDVQNISPLHARITMEPFERGYGHTLGNALRRILLSSMPGFAPTEVQISGVVHEYSALDGVQEDVVDILLNLKGIVLKLHNRTEALLTLSKKGEGTVTAGDIEGGHDVEIINPDHVVAHLTSGGKLDMQIKVEMGRGYVPGTVRQLAHESRAIGSILLDASFSPVRRVSYAVESARVEQRTDLDKLVMDIETNGVVDPEEAIRYAAKVLVEQLSVFADLKGTPLPVEQPKLPQIDPVLLRPVDDLELTVRSANCLKAENIYYIGDLIQRTETELLKTPNLGRKSLNEIKEVLASRGLTLGMKLESWPPSNLDKGKKDTSHAAP.

The segment at 1–231 is alpha N-terminal domain (alpha-NTD); the sequence is MQSNTFLTPR…EQLSVFADLK (231 aa). The interval 245–334 is alpha C-terminal domain (alpha-CTD); the sequence is IDPVLLRPVD…GKKDTSHAAP (90 aa).

The protein belongs to the RNA polymerase alpha chain family. In terms of assembly, homodimer. The RNAP catalytic core consists of 2 alpha, 1 beta, 1 beta' and 1 omega subunit. When a sigma factor is associated with the core the holoenzyme is formed, which can initiate transcription.

It catalyses the reaction RNA(n) + a ribonucleoside 5'-triphosphate = RNA(n+1) + diphosphate. Functionally, DNA-dependent RNA polymerase catalyzes the transcription of DNA into RNA using the four ribonucleoside triphosphates as substrates. The protein is DNA-directed RNA polymerase subunit alpha of Nitrosospira multiformis (strain ATCC 25196 / NCIMB 11849 / C 71).